A 373-amino-acid chain; its full sequence is MSQHVETKLAQIGNRSDEVTGTVSAPIYLSTAYRHRGIGESTGFDYVRTKNPTRQLVEDAIANLENGARGLAFSSGMAAIQTIMALFKSGDELIVSSDLYGGTYRLFENEWKKYGLTFHYDDFSDEDCLRSKITPNTKAVFVETPTNPLMQEADIEHIARITKEHGLLLIVDNTFYTPVLQRPLELGADIVIHSATKYLGGHNDLLAGLVVVKDERLGEEMFQHQNAIGAVLPPFDSWLLMRGMKTLSLRMRQHQANAQELAAFLEEQEEISDVLYPGKGGMLSFRLQKEEWVNPFLKALKTICFAESLGGVESFITYPATQTHMDIPEEIRIANGVCNRLLRFSVGIEHAEDLKEDLKQALCQVKEGAVSFE.

The residue at position 197 (lysine 197) is an N6-(pyridoxal phosphate)lysine.

This sequence belongs to the trans-sulfuration enzymes family. As to quaternary structure, homotetramer. It depends on pyridoxal 5'-phosphate as a cofactor.

The protein localises to the cytoplasm. It carries out the reaction O-acetyl-L-homoserine + L-cysteine = L,L-cystathionine + acetate + H(+). It catalyses the reaction O-acetyl-L-homoserine + hydrogen sulfide = L-homocysteine + acetate. It functions in the pathway amino-acid biosynthesis; L-methionine biosynthesis via de novo pathway. Catalyzes the formation of L-cystathionine from O-acetyl-L-homoserine and L-cysteine. Cannot use O-succinyl-L-homoserine as substrate. Also exhibits O-acetylhomoserine thiolyase activity, catalyzing the synthesis of L-homocysteine from O-acetyl-L-homoserine and sulfide. The protein is Cystathionine gamma-synthase/O-acetylhomoserine (thiol)-lyase (metI) of Bacillus subtilis (strain 168).